A 483-amino-acid chain; its full sequence is O-acetyltransferase pboB (483 aa).

The protein belongs to the fumigaclavine B O-acetyltransferase family. As to quaternary structure, monomer.

The protein operates within secondary metabolite biosynthesis. Functionally, O-acetyltransferase; part of the gene cluster that mediates the biosynthesis of protubonine B, a hydroxylated and diacetylated cyclo-L-Trp-L-Leu derivative. Within the pathway, pboB catalyzes the acetylation of protubonine C at N-1 of the indoline ring to produce protubonine B. The first step of the protubonine B synthesis is performed by the nonribosomal peptide synthetase pboA that catalyzes the formation of cyclo-L-Trp-L-Leu by condensing L-Leu with L-Trp. The flavin-dependent monooxygenase pboD is responsible for hydroxylation at C-3 of the indole ring and subsequent formation of the pyrrolidine ring, leadind to protubonine D. Protubonine D is further diacetylated by two acetyltransferases, pboB and pboC, to form the final product protubonine B via protubonine C. This Aspergillus ustus protein is O-acetyltransferase pboB.